The chain runs to 816 residues: Glycerol-3-phosphate acyltransferase (816 aa).

The short motif at 298 to 303 is the HXXXXD motif element; it reads CHRSHM.

This sequence belongs to the GPAT/DAPAT family.

It is found in the cell membrane. It catalyses the reaction sn-glycerol 3-phosphate + an acyl-CoA = a 1-acyl-sn-glycero-3-phosphate + CoA. It participates in phospholipid metabolism; CDP-diacylglycerol biosynthesis; CDP-diacylglycerol from sn-glycerol 3-phosphate: step 1/3. This is Glycerol-3-phosphate acyltransferase from Hamiltonella defensa subsp. Acyrthosiphon pisum (strain 5AT).